We begin with the raw amino-acid sequence, 244 residues long: Dehydration-responsive element-binding protein 2E (244 aa).

A disordered region spans residues 1–25 (MEKEDNGSKQSSSASVVSSRRRRRV). Residues 20–46 (RRRRRVVEPVEATLQRWEEEGLARARR) carry the Nuclear localization signal motif. The segment at residues 69 to 134 (RFRGVRQRVW…YGPYARLNFP (66 aa)) is a DNA-binding region (AP2/ERF).

This sequence belongs to the AP2/ERF transcription factor family. ERF subfamily. As to expression, expressed in xylem tissues, stigma, anthers and region where sepals and petals attach the peduncle.

It localises to the nucleus. Functionally, transcriptional activator that binds specifically to the DNA sequence 5'-[AG]CCGAC-3'. Binding to the C-repeat/DRE element mediates abscisic acid-inducible transcription. Involved in the regulation of plant development and tolerance to abiotic stresses. This is Dehydration-responsive element-binding protein 2E (DREB2E) from Arabidopsis thaliana (Mouse-ear cress).